We begin with the raw amino-acid sequence, 1489 residues long: Chromosome partition protein MukB (1489 aa).

An ATP-binding site is contributed by 34–41 (GGNGAGKS). 7 coiled-coil regions span residues 326 to 418 (LEAD…QYNQ), 444 to 472 (LETFQAKEQEATEKLLSLEQKMSVAQTAH), 509 to 602 (RHLA…QRAP), 780 to 805 (RAARENRIESLHAEREGLSERFATLS), 835 to 919 (EAEI…GNQL), 977 to 1116 (EMLS…AKAG), and 1209 to 1266 (VEAI…QNVS). Positions 666–783 (PGGSEDSRLN…TVPIFGRAAR (118 aa)) are flexible hinge.

The protein belongs to the SMC family. MukB subfamily. In terms of assembly, homodimerization via its hinge domain. Binds to DNA via its C-terminal region. Interacts, and probably forms a ternary complex, with MukE and MukF via its C-terminal region. The complex formation is stimulated by calcium or magnesium. Interacts with tubulin-related protein FtsZ.

The protein localises to the cytoplasm. Its subcellular location is the nucleoid. In terms of biological role, plays a central role in chromosome condensation, segregation and cell cycle progression. Functions as a homodimer, which is essential for chromosome partition. Involved in negative DNA supercoiling in vivo, and by this means organize and compact chromosomes. May achieve or facilitate chromosome segregation by condensation DNA from both sides of a centrally located replisome during cell division. This Citrobacter koseri (strain ATCC BAA-895 / CDC 4225-83 / SGSC4696) protein is Chromosome partition protein MukB.